Consider the following 332-residue polypeptide: L-lactate dehydrogenase (332 aa).

Residues 29-57 (GQVG…CADK) and arginine 99 contribute to the NAD(+) site. Substrate contacts are provided by arginine 106, asparagine 138, and arginine 169. An NAD(+)-binding site is contributed by asparagine 138. The active-site Proton acceptor is histidine 193. Threonine 248 is a substrate binding site.

The protein belongs to the LDH/MDH superfamily. LDH family. As to quaternary structure, homotetramer.

Its subcellular location is the cytoplasm. The enzyme catalyses (S)-lactate + NAD(+) = pyruvate + NADH + H(+). The protein operates within fermentation; pyruvate fermentation to lactate; (S)-lactate from pyruvate: step 1/1. The protein is L-lactate dehydrogenase of Drosophila melanogaster (Fruit fly).